Here is a 1070-residue protein sequence, read N- to C-terminus: 3',5'-cyclic-AMP phosphodiesterase (1070 aa).

Disordered stretches follow at residues 1-91 (MSQE…KQDS), 166-215 (STSI…TRFQ), 487-516 (VPASNKSRRPNQSSSASRSGNPPGAPLSQG), and 615-653 (SAGQYARSRSPRGPPMSQISGVKRPLSHTNSFTGERLPT). Low complexity predominate over residues 51 to 69 (KQVQVQSQKFSSTSSTTKV). Positions 70–84 (ATHSFSMSSSAGTTG) are enriched in polar residues. Positions 166–210 (STSIITSSEQRTSTSTSSSSSTRYIASGSSNLAGGNSNSASSASS) are enriched in low complexity. The segment covering 488 to 506 (PASNKSRRPNQSSSASRSG) has biased composition (polar residues). Residues 656-985 (VETPRENELG…DYYQSMIPPS (330 aa)) enclose the PDEase domain. Histidine 732 acts as the Proton donor in catalysis. 732 to 736 (HNSLH) provides a ligand contact to 3',5'-cyclic AMP. A divalent metal cation-binding residues include histidine 736, histidine 772, aspartate 773, and aspartate 890. Residues aspartate 773, aspartate 890, and glutamine 941 each coordinate 3',5'-cyclic AMP. Residues 1007 to 1024 (EESDQENLAELEEGDESG) show a composition bias toward acidic residues. The interval 1007–1070 (EESDQENLAE…CQNQPQHGGM (64 aa)) is disordered. The span at 1025 to 1042 (GESTTTGTTGTTAASALS) shows a compositional bias: low complexity. The segment covering 1043 to 1054 (GAGGGGGGGGGM) has biased composition (gly residues). Residues 1060 to 1070 (GCQNQPQHGGM) are compositionally biased toward polar residues.

It belongs to the cyclic nucleotide phosphodiesterase family. PDE4 subfamily. In terms of assembly, monomer. The cofactor is a divalent metal cation.

The catalysed reaction is 3',5'-cyclic AMP + H2O = AMP + H(+). It participates in purine metabolism; 3',5'-cyclic AMP degradation; AMP from 3',5'-cyclic AMP: step 1/1. Functionally, hydrolyzes the second messenger cAMP, which is a key regulator of many important physiological processes. Vital for female fertility. Required for learning/memory. The polypeptide is 3',5'-cyclic-AMP phosphodiesterase (dnc) (Drosophila melanogaster (Fruit fly)).